The primary structure comprises 217 residues: GTPase IMAP family member GIMD1 (217 aa).

In terms of domain architecture, AIG1-type G spans 6–217; it reads KMIINLALFG…ENCYQVLTFK (212 aa). GTP-binding positions include 15-23, Ser36, and 148-150; these read GMTQSGKSS and HAE.

The protein belongs to the TRAFAC class TrmE-Era-EngA-EngB-Septin-like GTPase superfamily. AIG1/Toc34/Toc159-like paraseptin GTPase family. IAN subfamily.

The sequence is that of GTPase IMAP family member GIMD1 (GIMD1) from Homo sapiens (Human).